The chain runs to 346 residues: Acetylserotonin O-methyltransferase (346 aa).

S-adenosyl-L-methionine is bound by residues Tyr-148, Trp-165, Asp-211, 236–238, and Lys-253; that span reads GDF. His-256 acts as the Proton donor/acceptor in catalysis. Substrate is bound by residues Asp-257, Asn-303, and Gln-307.

Belongs to the class I-like SAM-binding methyltransferase superfamily. Cation-independent O-methyltransferase family. Homodimer. In terms of tissue distribution, expressed in pineal gland and retina.

The enzyme catalyses N-acetylserotonin + S-adenosyl-L-methionine = melatonin + S-adenosyl-L-homocysteine + H(+). It participates in aromatic compound metabolism; melatonin biosynthesis; melatonin from serotonin: step 1/2. Catalyzes the transfer of a methyl group onto N-acetylserotonin, producing melatonin (N-acetyl-5-methoxytryptamine). This is Acetylserotonin O-methyltransferase (ASMT) from Gallus gallus (Chicken).